Consider the following 339-residue polypeptide: MRVYYDRDADLNLIKGKKVVIVGYGSQGHAHALNLKDSGVKEIAIALRKGSASAQKAEAAGFKVMDVAEAAKWGDVVMMLTPDELQGDIYRENLHDNMKKGAALIFAHGLNVHFNLLDPRADLDVLMIAPKGPGHTVRSEYQRGGGVPCLIAVARDSSGNAHDLGLSYASAVGGGRAGIIETTFREECETDLFGEQVVLCGGLVELIKNGYETLVEAGYAPEMAYFECLHEVKLIVDLIYEGGIANMNYSISNTAEYGEYVTGPRIVTEETKKEMKRVLNDIQSGKFARDWMLENKVNQTSFKATRARLAAHPIEQVGAKLRDMMPWIKKGALVDKSKN.

One can recognise a KARI N-terminal Rossmann domain in the interval 1–182 (MRVYYDRDAD…GGGRAGIIET (182 aa)). NADP(+) contacts are provided by residues 24–27 (YGSQ), arginine 48, serine 51, serine 53, and 83–86 (DELQ). Histidine 108 is a catalytic residue. Glycine 134 contributes to the NADP(+) binding site. Positions 183-328 (TFREECETDL…AKLRDMMPWI (146 aa)) constitute a KARI C-terminal knotted domain. Mg(2+) is bound by residues aspartate 191, glutamate 195, glutamate 227, and glutamate 231. Serine 252 contributes to the substrate binding site.

The protein belongs to the ketol-acid reductoisomerase family. Mg(2+) serves as cofactor.

The enzyme catalyses (2R)-2,3-dihydroxy-3-methylbutanoate + NADP(+) = (2S)-2-acetolactate + NADPH + H(+). It catalyses the reaction (2R,3R)-2,3-dihydroxy-3-methylpentanoate + NADP(+) = (S)-2-ethyl-2-hydroxy-3-oxobutanoate + NADPH + H(+). It participates in amino-acid biosynthesis; L-isoleucine biosynthesis; L-isoleucine from 2-oxobutanoate: step 2/4. It functions in the pathway amino-acid biosynthesis; L-valine biosynthesis; L-valine from pyruvate: step 2/4. In terms of biological role, involved in the biosynthesis of branched-chain amino acids (BCAA). Catalyzes an alkyl-migration followed by a ketol-acid reduction of (S)-2-acetolactate (S2AL) to yield (R)-2,3-dihydroxy-isovalerate. In the isomerase reaction, S2AL is rearranged via a Mg-dependent methyl migration to produce 3-hydroxy-3-methyl-2-ketobutyrate (HMKB). In the reductase reaction, this 2-ketoacid undergoes a metal-dependent reduction by NADPH to yield (R)-2,3-dihydroxy-isovalerate. The chain is Ketol-acid reductoisomerase (NADP(+)) from Nitrobacter hamburgensis (strain DSM 10229 / NCIMB 13809 / X14).